The following is a 612-amino-acid chain: Threonine--tRNA ligase (612 aa).

The interval 218–509 (DHRKLGVELG…LSEHFGGNFP (292 aa)) is catalytic. Zn(2+) is bound by residues Cys-310, His-361, and His-486.

This sequence belongs to the class-II aminoacyl-tRNA synthetase family. As to quaternary structure, homodimer. Zn(2+) is required as a cofactor.

The protein localises to the cytoplasm. The catalysed reaction is tRNA(Thr) + L-threonine + ATP = L-threonyl-tRNA(Thr) + AMP + diphosphate + H(+). Catalyzes the attachment of threonine to tRNA(Thr) in a two-step reaction: L-threonine is first activated by ATP to form Thr-AMP and then transferred to the acceptor end of tRNA(Thr). Also edits incorrectly charged L-seryl-tRNA(Thr). This is Threonine--tRNA ligase from Helicobacter pylori (strain J99 / ATCC 700824) (Campylobacter pylori J99).